A 96-amino-acid polypeptide reads, in one-letter code: Glycine-rich protein DC7.1 (96 aa).

Residues 1 to 25 (MGSKIFLLLGLSIAFALLISSEVAA) form the signal peptide. The interval 29-66 (SETTTEGASLDGGHHGGGGGGHYSGGGGHGGSHHGGGG) is disordered. 2 repeat units span residues 42 to 50 (HHGGGGGGH) and 61 to 67 (HHGGGGH). Positions 42 to 67 (HHGGGGGGHYSGGGGHGGSHHGGGGH) are 2 approximate repeats of H-H-G(4,6)-H. Gly residues predominate over residues 43-66 (HGGGGGGHYSGGGGHGGSHHGGGG).

It belongs to the GRP family.

In terms of biological role, may be connected with the initiation of embryogenesis or with the metabolic changes produced by the removal of auxins. This chain is Glycine-rich protein DC7.1, found in Daucus carota (Wild carrot).